The following is a 1928-amino-acid chain: Myosin-1 (1928 aa).

In terms of domain architecture, Myosin N-terminal SH3-like spans 8–71; sequence SSNMIVWIPD…RISDVFPVNP (64 aa). In terms of domain architecture, Myosin motor spans 75 to 791; the sequence is DKVENMSELT…VLADLEKQKD (717 aa). Residue 180–187 participates in ATP binding; sequence GESGAGKT. Positions 460–529 are actin-binding; that stretch reads IGLLDIAGFE…LQLTIDLIES (70 aa). Over residues 629–641 the composition is skewed to polar residues; the sequence is SSSAGVEANISNQ. Residues 629-657 form a disordered region; the sequence is SSSAGVEANISNQEVKKSARTSTFKTTSS. The IQ domain occupies 794-823; sequence LNNIMIKLTATIRGYTVRKEITYHLQKLKK. Positions 856-1911 form a coiled coil; that stretch reads SSNDMTRTKK…FWKSRYESTM (1056 aa).

It belongs to the TRAFAC class myosin-kinesin ATPase superfamily. Myosin family.

In terms of biological role, required for cell division. In Saccharomyces cerevisiae (strain ATCC 204508 / S288c) (Baker's yeast), this protein is Myosin-1 (MYO1).